Consider the following 285-residue polypeptide: Probable endonuclease 4 (285 aa).

Zn(2+) contacts are provided by H69, H109, E145, D179, H182, H216, D229, H231, and E261.

The protein belongs to the AP endonuclease 2 family. The cofactor is Zn(2+).

The enzyme catalyses Endonucleolytic cleavage to 5'-phosphooligonucleotide end-products.. In terms of biological role, endonuclease IV plays a role in DNA repair. It cleaves phosphodiester bonds at apurinic or apyrimidinic (AP) sites, generating a 3'-hydroxyl group and a 5'-terminal sugar phosphate. The chain is Probable endonuclease 4 from Salmonella arizonae (strain ATCC BAA-731 / CDC346-86 / RSK2980).